Consider the following 64-residue polypeptide: Translational regulator CsrA (64 aa).

Belongs to the CsrA/RsmA family. Homodimer; the beta-strands of each monomer intercalate to form a hydrophobic core, while the alpha-helices form wings that extend away from the core.

It localises to the cytoplasm. Functionally, a key translational regulator that binds mRNA to regulate translation initiation and/or mRNA stability. Mediates global changes in gene expression, shifting from rapid growth to stress survival by linking envelope stress, the stringent response and the catabolite repression systems. Usually binds in the 5'-UTR; binding at or near the Shine-Dalgarno sequence prevents ribosome-binding, repressing translation, binding elsewhere in the 5'-UTR can activate translation and/or stabilize the mRNA. Its function is antagonized by small RNA(s). The sequence is that of Translational regulator CsrA from Actinobacillus pleuropneumoniae serotype 5b (strain L20).